Reading from the N-terminus, the 303-residue chain is Protein REVEILLE 5 (303 aa).

Residues 54 to 108 (TIKKSRENWTDQEHDKFLEALHLFDRDWKKIEAFVGSKTVVQIRSHAQKYFLKVQ) enclose the HTH myb-type domain. The H-T-H motif DNA-binding region spans 81 to 104 (WKKIEAFVGSKTVVQIRSHAQKYF). The disordered stretch occupies residues 109–130 (KSGANEHLPPPRPKRKASHPYP).

It is found in the nucleus. Functionally, probable transcription factor. The protein is Protein REVEILLE 5 (RVE5) of Arabidopsis thaliana (Mouse-ear cress).